The following is a 249-amino-acid chain: 1-(5-phosphoribosyl)-5-[(5-phosphoribosylamino)methylideneamino] imidazole-4-carboxamide isomerase (249 aa).

Aspartate 10 (proton acceptor) is an active-site residue. The active-site Proton donor is aspartate 136.

Belongs to the HisA/HisF family.

Its subcellular location is the cytoplasm. It carries out the reaction 1-(5-phospho-beta-D-ribosyl)-5-[(5-phospho-beta-D-ribosylamino)methylideneamino]imidazole-4-carboxamide = 5-[(5-phospho-1-deoxy-D-ribulos-1-ylimino)methylamino]-1-(5-phospho-beta-D-ribosyl)imidazole-4-carboxamide. It functions in the pathway amino-acid biosynthesis; L-histidine biosynthesis; L-histidine from 5-phospho-alpha-D-ribose 1-diphosphate: step 4/9. The polypeptide is 1-(5-phosphoribosyl)-5-[(5-phosphoribosylamino)methylideneamino] imidazole-4-carboxamide isomerase (Symbiobacterium thermophilum (strain DSM 24528 / JCM 14929 / IAM 14863 / T)).